A 557-amino-acid chain; its full sequence is Potassium-transporting ATPase potassium-binding subunit (557 aa).

12 helical membrane-spanning segments follow: residues 5-25 (GFLLIATFLLVLMVLARPLGS), 63-83 (LCAILGLNMLGLAVLFFMLLG), 132-152 (GLTVQNFLSAASGIAVIFAFI), 170-190 (LLRITLWVLVPVALLIALFLI), 253-273 (FVQMLAIFLIPTALCFAFGEV), 283-303 (LLWAMSVIFVICVGVVMWAEV), 329-349 (VLVSSLFAVVTTAASCGAVIA), 356-376 (ALGGMVPMWLMQIGEVVFGGV), 379-399 (GLYGMMLFVLLAVFIAGLMIG), 416-436 (LTALAILVTPTLVLMGAALAM), 484-504 (LLAFCMFVGRFGVIIPVMAIA), and 526-546 (LFVGLLIGTVLLVGALTFIPA).

The protein belongs to the KdpA family. The system is composed of three essential subunits: KdpA, KdpB and KdpC.

The protein localises to the cell inner membrane. In terms of biological role, part of the high-affinity ATP-driven potassium transport (or Kdp) system, which catalyzes the hydrolysis of ATP coupled with the electrogenic transport of potassium into the cytoplasm. This subunit binds the periplasmic potassium ions and delivers the ions to the membrane domain of KdpB through an intramembrane tunnel. The chain is Potassium-transporting ATPase potassium-binding subunit from Shigella boydii serotype 18 (strain CDC 3083-94 / BS512).